We begin with the raw amino-acid sequence, 448 residues long: T-box transcription factor TBX19 (448 aa).

The segment at residues 45–218 is a DNA-binding region (T-box); sequence LEDAPLWQRF…YNPFAKAFLD (174 aa).

It is found in the nucleus. Transcriptional regulator involved in developmental processes. Can activate POMC gene expression and repress the alpha glycoprotein subunit and thyroid-stimulating hormone beta promoters. The sequence is that of T-box transcription factor TBX19 from Homo sapiens (Human).